A 121-amino-acid polypeptide reads, in one-letter code: Immunoglobulin kappa variable 4-1 (121 aa).

A signal peptide spans 1 to 20 (MVLQTQVFISLLLWISGAYG). A framework-1 region spans residues 21–43 (DIVMTQSPDSLAVSLGERATINC). In terms of domain architecture, Ig-like spans 21-121 (DIVMTQSPDS…YYCQQYYSTP (101 aa)). Cys43 and Cys114 are oxidised to a cystine. Residues 44 to 60 (KSSQSVLYSSNNKNYLA) form a complementarity-determining-1 region. The interval 61–75 (WYQQKPGQPPKLLIY) is framework-2. A complementarity-determining-2 region spans residues 76-82 (WASTRES). Positions 83 to 114 (GVPDRFSGSGSGTDFTLTISSLQAEDVAVYYC) are framework-3. The tract at residues 115–121 (QQYYSTP) is complementarity-determining-3.

In terms of assembly, immunoglobulins are composed of two identical heavy chains and two identical light chains; disulfide-linked.

The protein localises to the secreted. It is found in the cell membrane. In terms of biological role, v segment of the variable domain of immunoglobulins light chain that participates in the antigen recognition. Immunoglobulins, also known as antibodies, are membrane-bound or secreted glycoproteins produced by B lymphocytes. In the recognition phase of humoral immunity, the membrane-bound immunoglobulins serve as receptors which, upon binding of a specific antigen, trigger the clonal expansion and differentiation of B lymphocytes into immunoglobulins-secreting plasma cells. Secreted immunoglobulins mediate the effector phase of humoral immunity, which results in the elimination of bound antigens. The antigen binding site is formed by the variable domain of one heavy chain, together with that of its associated light chain. Thus, each immunoglobulin has two antigen binding sites with remarkable affinity for a particular antigen. The variable domains are assembled by a process called V-(D)-J rearrangement and can then be subjected to somatic hypermutations which, after exposure to antigen and selection, allow affinity maturation for a particular antigen. The chain is Immunoglobulin kappa variable 4-1 from Homo sapiens (Human).